The following is a 926-amino-acid chain: Thyroid peroxidase (926 aa).

An N-terminal signal peptide occupies residues 1–14 (MGARAVLGVTLAVA). Over 19-844 (FFASILRRKD…TCVDAGRLPR (826 aa)) the chain is Extracellular. Asn129 is a glycosylation site (N-linked (GlcNAc...) asparagine). Cys142 and Cys158 are joined by a disulfide. Asp238 provides a ligand contact to heme b. The active-site Proton acceptor is His239. Ca(2+) is bound at residue Asp240. Cystine bridges form between Cys259-Cys269 and Cys263-Cys286. 2 N-linked (GlcNAc...) asparagine glycosylation sites follow: Asn277 and Asn307. Positions 321, 323, 325, and 327 each coordinate Ca(2+). The N-linked (GlcNAc...) asparagine glycan is linked to Asn342. 2 residues coordinate heme b: Glu398 and His493. Cystine bridges form between Cys596-Cys653, Cys694-Cys719, Cys740-Cys780, Cys766-Cys792, Cys798-Cys812, Cys806-Cys821, and Cys823-Cys836. Residues 738–793 (DACGFPDPVEDGGFLLCEERGQRVLVFSCRHGFRLRGPAQITCTPRGWDSPPPLCK) form the Sushi domain. One can recognise an EGF-like; calcium-binding domain in the interval 794–837 (DINECEDETDPPCHASARCKNTKGGVLCECSDPLVLGEDGRTCV). The helical transmembrane segment at 845 to 869 (ASVVSIALGAVLVCGLAGLAWTVVC) threads the bilayer. Residues 870-926 (RWTHADARPLLPVGEGEGDGKSPSLPLPGCGNRRDVGAAPALEVEQDLSCGSRGLCE) lie on the Cytoplasmic side of the membrane.

This sequence belongs to the peroxidase family. XPO subfamily. Interacts with DUOX1, DUOX2 and CYBA. Ca(2+) serves as cofactor. It depends on heme b as a cofactor. Post-translationally, heme is covalently bound through a H(2)O(2)-dependent autocatalytic process. Heme insertion is important for the delivery of protein at the cell surface. Cleaved in its N-terminal part. In terms of processing, N-glycosylated; contains mannose and N-acetylglucosamine.

Its subcellular location is the membrane. It carries out the reaction 2 iodide + H2O2 + 2 H(+) = diiodine + 2 H2O. The enzyme catalyses [thyroglobulin]-L-tyrosine + iodide + H2O2 + H(+) = [thyroglobulin]-3-iodo-L-tyrosine + 2 H2O. The catalysed reaction is [thyroglobulin]-3-iodo-L-tyrosine + iodide + H2O2 + H(+) = [thyroglobulin]-3,5-diiodo-L-tyrosine + 2 H2O. It catalyses the reaction 2 [thyroglobulin]-3,5-diiodo-L-tyrosine + H2O2 = [thyroglobulin]-L-thyroxine + [thyroglobulin]-dehydroalanine + 2 H2O. It carries out the reaction [thyroglobulin]-3-iodo-L-tyrosine + [thyroglobulin]-3,5-diiodo-L-tyrosine + H2O2 = [thyroglobulin]-3,3',5-triiodo-L-thyronine + [thyroglobulin]-dehydroalanine + 2 H2O. The protein operates within hormone biosynthesis; thyroid hormone biosynthesis. Functionally, iodination and coupling of the hormonogenic tyrosines in thyroglobulin to yield the thyroid hormones T(3) and T(4). In Sus scrofa (Pig), this protein is Thyroid peroxidase (TPO).